The following is a 65-amino-acid chain: Small ribosomal subunit protein bS21B (65 aa).

It belongs to the bacterial ribosomal protein bS21 family.

The chain is Small ribosomal subunit protein bS21B from Francisella tularensis subsp. holarctica (strain LVS).